The chain runs to 413 residues: Corticotropin-releasing factor receptor 2 (413 aa).

Residues 1–22 (MDSTIFEIIIDEFDANCSLLDA) constitute a signal peptide (not cleaved). The Extracellular segment spans residues 1 to 110 (MDSTIFEIII…CVPILDNKRK (110 aa)). N-linked (GlcNAc...) asparagine glycosylation is present at N16. 3 disulfides stabilise this stretch: C17–C53, C43–C86, and C67–C101. N-linked (GlcNAc...) asparagine glycosylation is found at N77, N89, and N97. The helical transmembrane segment at 111–141 (YALHYKIALIINYLGHCISILALVIAFLLFL) threads the bilayer. Residues 142–148 (CLRSIRC) are Cytoplasmic-facing. A helical membrane pass occupies residues 149-173 (LRNIIHWNLITTFILRNIMWFLLQM). Over 174 to 187 (IDHNIHESNEVWCR) the chain is Extracellular. A disulfide bond links C186 and C256. A helical transmembrane segment spans residues 188–216 (CITTIYNYFVVTNFFWMFVEGCYLHTAIV). The Cytoplasmic portion of the chain corresponds to 217–223 (MTYSTDK). Residues 224 to 251 (LRKWVFLFIGWCIPSPIIVTWAICKLFY) form a helical membrane-spanning segment. Over 252–267 (ENEQCWIGKEPGKYID) the chain is Extracellular. A helical membrane pass occupies residues 268 to 293 (YIYQGRVILVLLINFVFLFNIVRILM). At 294-304 (TKLRASTTSET) the chain is on the cytoplasmic side. A helical transmembrane segment spans residues 305-329 (IQYRKAVKATLVLLPLLGITYMLFF). Residues 330 to 336 (VNPGEDD) lie on the Extracellular side of the membrane. A helical membrane pass occupies residues 337–366 (VSQIVFIYFNSFLQSFQGFFVSVFYCFLNG). At 367-413 (EVRSAARKRWHRWQDHHSLRVRVARAMSIPTSPTRISFHSIKQTAAV) the chain is on the cytoplasmic side.

Belongs to the G-protein coupled receptor 2 family. Post-translationally, a N-glycosylation site within the signal peptide impedes its proper cleavage and function.

Its subcellular location is the cell membrane. G-protein coupled receptor for CRH (corticotropin-releasing factor), UCN (urocortin), UCN2 and UCN3. Has high affinity for UCN. Ligand binding causes a conformation change that triggers signaling via guanine nucleotide-binding proteins (G proteins) and down-stream effectors, such as adenylate cyclase. Promotes the activation of adenylate cyclase, leading to increased intracellular cAMP levels. The sequence is that of Corticotropin-releasing factor receptor 2 (crhr2) from Xenopus laevis (African clawed frog).